We begin with the raw amino-acid sequence, 428 residues long: Glutamyl-tRNA reductase (428 aa).

Residues 49-52, S109, 114-116, and Q120 each bind substrate; these read TCNR and EGQ. The active-site Nucleophile is C50. NADP(+) is bound at residue 189 to 194; sequence GAGKMA.

This sequence belongs to the glutamyl-tRNA reductase family. As to quaternary structure, homodimer.

The catalysed reaction is (S)-4-amino-5-oxopentanoate + tRNA(Glu) + NADP(+) = L-glutamyl-tRNA(Glu) + NADPH + H(+). Its pathway is porphyrin-containing compound metabolism; protoporphyrin-IX biosynthesis; 5-aminolevulinate from L-glutamyl-tRNA(Glu): step 1/2. It functions in the pathway porphyrin-containing compound metabolism; chlorophyll biosynthesis. Functionally, catalyzes the NADPH-dependent reduction of glutamyl-tRNA(Glu) to glutamate 1-semialdehyde (GSA). In Rippkaea orientalis (strain PCC 8801 / RF-1) (Cyanothece sp. (strain PCC 8801)), this protein is Glutamyl-tRNA reductase.